We begin with the raw amino-acid sequence, 83 residues long: Colicin-E5 immunity protein (83 aa).

Functionally, this protein is able to protect a cell, which harbors the plasmid ColE5 encoding colicin E5, against colicin E5. This Escherichia coli protein is Colicin-E5 immunity protein (imm).